A 203-amino-acid polypeptide reads, in one-letter code: MNVSLYYSGTPVSSHSLLSKNGLSNIVLTCKDLPIPIDLLSLFFDILNERHPSFDEHMFLQMIRKPDDPENLSVFLKSAIWMLSHKRDLPGHYRLPLTCLVSTYSEYFVELKPRQPSTKCWFCKIAKDGLPFRVEGVHGFPSEAELYIVPSKEHAIESFEVLSGKKLYRSPSKKKHGYLIASNKPPLTSKYVEYDPSKPDTKP.

Belongs to the tenuiviruses p3 protein family. As to quaternary structure, homodimer.

The protein resides in the host cytoplasm. In terms of biological role, acts as a suppressor of RNA-mediated gene silencing, also known as post-transcriptional gene silencing (PTGS), presumably through the binding of dsRNA. This Oryza sativa (Rice) protein is Suppressor of RNA silencing p3.